Reading from the N-terminus, the 263-residue chain is 4-hydroxy-tetrahydrodipicolinate reductase (263 aa).

Residues 7-12 (GFKGRM), 96-98 (GTT), and 122-125 (APNF) each bind NAD(+). The active-site Proton donor/acceptor is the His-152. His-153 contacts (S)-2,3,4,5-tetrahydrodipicolinate. Lys-156 functions as the Proton donor in the catalytic mechanism. (S)-2,3,4,5-tetrahydrodipicolinate is bound at residue 162–163 (GT).

This sequence belongs to the DapB family.

The protein resides in the cytoplasm. The enzyme catalyses (S)-2,3,4,5-tetrahydrodipicolinate + NAD(+) + H2O = (2S,4S)-4-hydroxy-2,3,4,5-tetrahydrodipicolinate + NADH + H(+). The catalysed reaction is (S)-2,3,4,5-tetrahydrodipicolinate + NADP(+) + H2O = (2S,4S)-4-hydroxy-2,3,4,5-tetrahydrodipicolinate + NADPH + H(+). The protein operates within amino-acid biosynthesis; L-lysine biosynthesis via DAP pathway; (S)-tetrahydrodipicolinate from L-aspartate: step 4/4. Catalyzes the conversion of 4-hydroxy-tetrahydrodipicolinate (HTPA) to tetrahydrodipicolinate. The polypeptide is 4-hydroxy-tetrahydrodipicolinate reductase (Listeria monocytogenes serovar 1/2a (strain ATCC BAA-679 / EGD-e)).